Reading from the N-terminus, the 117-residue chain is Putative pterin-4-alpha-carbinolamine dehydratase (117 aa).

The protein belongs to the pterin-4-alpha-carbinolamine dehydratase family.

It carries out the reaction (4aS,6R)-4a-hydroxy-L-erythro-5,6,7,8-tetrahydrobiopterin = (6R)-L-erythro-6,7-dihydrobiopterin + H2O. This Azoarcus sp. (strain BH72) protein is Putative pterin-4-alpha-carbinolamine dehydratase.